The sequence spans 482 residues: Histone deacetylase 1 (482 aa).

The histone deacetylase stretch occupies residues 9-321; the sequence is RKVCYYYDGD…WTYETAVALD (313 aa). Glycine 27 and lysine 31 together coordinate 1D-myo-inositol 1,4,5,6-tetrakisphosphate. Residue lysine 74 is modified to N6-acetyllysine; alternate. Residue lysine 74 forms a Glycyl lysine isopeptide (Lys-Gly) (interchain with G-Cter in SUMO2); alternate linkage. Histidine 141 is a catalytic residue. Residues aspartate 176 and histidine 178 each coordinate Zn(2+). Lysine 220 is modified (N6-acetyllysine). At cysteine 261 the chain carries S-nitrosocysteine. Aspartate 264 is a Zn(2+) binding site. Arginine 270 contributes to the 1D-myo-inositol 1,4,5,6-tetrakisphosphate binding site. Cysteine 273 is modified (S-nitrosocysteine). Positions 390 to 400 are enriched in acidic residues; sequence PEESGDEDEED. Residues 390 to 482 form a disordered region; the sequence is PEESGDEDEE…KGVKEEVKLA (93 aa). Residues serine 393, serine 406, serine 409, serine 421, and serine 423 each carry the phosphoserine modification. Residues 401 to 416 are compositionally biased toward basic and acidic residues; sequence PDKRISICSSDKRIAC. Residues 417–427 are compositionally biased toward acidic residues; sequence EEEFSDSDEEG. Lysine 432 is subject to N6-methylated lysine; by EHMT2. Lysine 438 is covalently cross-linked (Glycyl lysine isopeptide (Lys-Gly) (interchain with G-Cter in SUMO2)). The segment covering 443 to 482 has biased composition (basic and acidic residues); it reads VKTEDEKEKDPEEKKEVTEEEKTKEEKQEAKGVKEEVKLA. Lysine 444 participates in a covalent cross-link: Glycyl lysine isopeptide (Lys-Gly) (interchain with G-Cter in SUMO2); alternate. Lysine 444 participates in a covalent cross-link: Glycyl lysine isopeptide (Lys-Gly) (interchain with G-Cter in SUMO); alternate. Residues lysine 456, lysine 457, and lysine 473 each participate in a glycyl lysine isopeptide (Lys-Gly) (interchain with G-Cter in SUMO2) cross-link. Residue lysine 476 forms a Glycyl lysine isopeptide (Lys-Gly) (interchain with G-Cter in SUMO2); alternate linkage. Lysine 476 participates in a covalent cross-link: Glycyl lysine isopeptide (Lys-Gly) (interchain with G-Cter in SUMO); alternate. Lysine 480 participates in a covalent cross-link: Glycyl lysine isopeptide (Lys-Gly) (interchain with G-Cter in SUMO2).

Belongs to the histone deacetylase family. HD type 1 subfamily. In terms of assembly, part of the core histone deacetylase (HDAC) complex composed of HDAC1, HDAC2, RBBP4 and RBBP7, the core complex associates with SIN3, SAP18 and SAP30 to form the SIN3 HDAC complex. Component of the nucleosome remodeling and deacetylase (NuRD) repressor complex, composed of core proteins MTA1, MTA2, MTA3, RBBP4, RBBP7, HDAC1, HDAC2, MBD2, MBD3, and peripherally associated proteins CDK2AP1, CDK2AP2, GATAD2A, GATAD2B, CHD3, CHD4 and CHD5. The exact stoichiometry of the NuRD complex is unknown, and some subunits such as MBD2 and MBD3, GATAD2A and GATAD2B, and CHD3, CHD4 and CHD5 define mutually exclusive NuRD complexes. Component of a BHC histone deacetylase complex that contains HDAC1, HDAC2, HMG20B/BRAF35, KDM1A, RCOR1/CoREST and PHF21A/BHC80. The BHC complex may also contain ZMYM2, ZNF217, ZMYM3, GSE1 and GTF2I. Component of a mSin3A corepressor complex that contains SIN3A, SAP130, SUDS3/SAP45, ARID4B/SAP180, HDAC1 and HDAC2. Found in a trimeric complex with APBB1 and TSHZ3; the interaction between HDAC1 and APBB1 is mediated by TSHZ3. Forms a complex comprising APPL1, RUVBL2, APPL2, CTNNB1 and HDAC2. Component of a RCOR/GFI/KDM1A/HDAC complex. Part of a complex composed of TRIM28, HDAC1, HDAC2 and EHMT2. Part of a complex containing at least CDYL, MIER1, MIER2, HDAC1 and HDAC2. The large PER complex involved in the histone deacetylation is composed of at least HDAC1, PER2, SFPQ and SIN3A. Associates with the 9-1-1 complex; interacts with HUS1. Found in a complex with DNMT3A and HDAC7. Found in a complex with YY1, SIN3A and GON4L. Identified in a histone deacetylase complex that contains DNTTIP1, HDAC1 and MIDEAS; this complex assembles into a tetramer that contains four copies of each protein chain. Found in a complex composed of at least SINHCAF, SIN3A, HDAC1, SAP30, RBBP4, OGT and TET1. Component of the SIN3B complex, which includes SIN3B, HDAC1, PHF12 and MORF4L1. Interacts with GFI1; the interaction is direct. Interacts directly with GFI1B. Interacts with TSHZ3 (via N-terminus); the interaction is direct. Interacts with APEX1; the interaction is not dependent on the acetylated status of APEX1. Interacts with BANP. Interacts with BAZ2A/TIP5. Interacts with BCL6. Interacts with BCOR. Interacts with BHLHE40/DEC1. Interacts with BRCC3; this interaction is enhanced in the presence of PWWP2B. Interacts with BRMS1. Interacts with BRMS1L. Interacts with C10orf90/FATS (via its N-terminal); the interaction prevents binding of HDAC1 to CDKN1A/p21 and facilitates the acetylation and stabilization of CDKN1A/p21. Interacts with CBFA2T3. Interacts with CCAR2. Interacts with CDK2AP1. Interacts with CHD3. Interacts with CHD4. Interacts with CHFR. Interacts with CIART. Interacts with CDKN1A/p21. Interacts with CDK5 complexed to CDK5R1 (p25). Interacts with CRY1. Interacts with DAXX. Interacts with DDIT3/CHOP. Interacts with DDX5. Interacts with DHX36; this interaction occurs in a RNA-dependent manner. Interacts with DNMT1. Interacts with DNTTIP1. Interacts with E4F1. Interacts with EP300. Interacts with ERCC6. Interacts with GATAD2A. Interacts with HCFC1. Interacts with HDAC9. Interacts with HUS1. Interacts with INSM1. Interacts with KDM4A. Interacts with KDM5A; this interaction impairs histone deacetylation. Interacts with KDM5B. Interacts with KLF1. Interacts with MBD3L2. Interacts with MIER1. Interacts with NFE4. Interacts with NR4A2/NURR1. Interacts with NR1D2 (via C-terminus). Interacts with NRIP1. Interacts with NSD2. Interacts with PACS2. Interacts with PHB2. Interacts with PPHLN1. Interacts with PRDM6. Interacts with PRDM16. Interacts with PWWP2A in a MTA1-dependent manner. Interacts with PWWP2B. Interacts with RB1. Interacts with RERE. Interacts with SANBR (via the BTB domain). Interacts with SAMSN1. Interacts with SAP30L. Interacts with SETDB1. Interacts with SIN3A. Interacts with SMAD3. Interacts with SMAD4; positively regulated by ZBTB7A. Interacts with SMARCAD1. Interacts with SMARCA4/BRG1. Interacts with SMYD2. Interacts with SMYD4 (via MYND-type zinc finger). Interacts with SP1; the interaction deacetylates SP1 and regulates its transcriptional activity. Interacts with SP3; the interaction deacetylates SP3 and regulates its transcriptional activity. In vitro, C(18) ceramides increase this interaction and the subsequent SP3 deacetylation and SP3-mediated repression of the TERT promoter. Interacts with SPEN/MINT. Interacts with SPHK2. Interacts with SUV39H1. Interacts with TGIF. Interacts with TGIF2. Interacts with TRAF6. Interacts with TRIM28; the interaction recruits HDAC1 to E2F1 and inhibits its acetylation. Interacts with TSC22D3 isoform 1; this interaction affects HDAC1 activity on MYOG promoter and thus inhibits MYOD1 transcriptional activity. Interacts with UHRF1. Interacts with UHRF2. Interacts with ZBTB7A. Interacts with ZMYND8. Interacts with ZMYND15. Interacts with ZNF431. Interacts with ZNF516; this interaction is enhanced in the presence of PWWP2B. Interacts with ZNF541. Interacts with ZNF638. Interacts with ZNHIT1. Interacts with the non-histone region of MACROH2A1. Identified in a complex with HDAC2, KCTD19, DNTTIP1 and ZNF541. Interacts with MSX3. Interacts with VRK1. Zn(2+) is required as a cofactor. Post-translationally, sumoylated on Lys-444 and Lys-476; which promotes enzymatic activity. Desumoylated by SENP1. Phosphorylation on Ser-421 and Ser-423 promotes enzymatic activity and interactions with NuRD and SIN3 complexes. Phosphorylated by CDK5. In terms of processing, ubiquitinated by CHFR and KCTD11, leading to its degradation by the proteasome.

It localises to the nucleus. The catalysed reaction is N(6)-acetyl-L-lysyl-[histone] + H2O = L-lysyl-[histone] + acetate. The enzyme catalyses N(6)-acetyl-L-lysyl-[protein] + H2O = L-lysyl-[protein] + acetate. It catalyses the reaction N(6)-(2E)-butenoyl-L-lysyl-[protein] + H2O = (2E)-2-butenoate + L-lysyl-[protein]. It carries out the reaction N(6)-[(S)-lactoyl]-L-lysyl-[protein] + H2O = (S)-lactate + L-lysyl-[protein]. Its activity is regulated as follows. Inositol tetraphosphate (1D-myo-inositol 1,4,5,6-tetrakisphosphate) may act as an intermolecular glue between HDAC1 and N-Cor repressor complex components. Histone deacetylase that catalyzes the deacetylation of lysine residues on the N-terminal part of the core histones (H2A, H2B, H3 and H4). Histone deacetylation gives a tag for epigenetic repression and plays an important role in transcriptional regulation, cell cycle progression and developmental events. Histone deacetylases act via the formation of large multiprotein complexes. Acts as a component of the histone deacetylase NuRD complex which participates in the remodeling of chromatin. As part of the SIN3B complex is recruited downstream of the constitutively active genes transcriptional start sites through interaction with histones and mitigates histone acetylation and RNA polymerase II progression within transcribed regions contributing to the regulation of transcription. Also functions as a deacetylase for non-histone targets, such as NR1D2, RELA, SP1, SP3, STAT3 and TSHZ3. Deacetylates SP proteins, SP1 and SP3, and regulates their function. Component of the BRG1-RB1-HDAC1 complex, which negatively regulates the CREST-mediated transcription in resting neurons. Upon calcium stimulation, HDAC1 is released from the complex and CREBBP is recruited, which facilitates transcriptional activation. Deacetylates TSHZ3 and regulates its transcriptional repressor activity. Deacetylates 'Lys-310' in RELA and thereby inhibits the transcriptional activity of NF-kappa-B. Deacetylates NR1D2 and abrogates the effect of KAT5-mediated relieving of NR1D2 transcription repression activity. Component of a RCOR/GFI/KDM1A/HDAC complex that suppresses, via histone deacetylase (HDAC) recruitment, a number of genes implicated in multilineage blood cell development. Involved in CIART-mediated transcriptional repression of the circadian transcriptional activator: CLOCK-BMAL1 heterodimer. Required for the transcriptional repression of circadian target genes, such as PER1, mediated by the large PER complex or CRY1 through histone deacetylation. In addition to protein deacetylase activity, also has protein-lysine deacylase activity: acts as a protein decrotonylase and delactylase by mediating decrotonylation ((2E)-butenoyl) and delactylation (lactoyl) of histones, respectively. The polypeptide is Histone deacetylase 1 (HDAC1) (Bos taurus (Bovine)).